The following is a 116-amino-acid chain: NADH-quinone oxidoreductase subunit A (116 aa).

3 consecutive transmembrane segments (helical) span residues 3-23 (FTFL…VIAL), 61-81 (FAIL…WAVV), and 88-108 (QGLV…AYAW).

The protein belongs to the complex I subunit 3 family. NDH-1 is composed of 14 different subunits. Subunits NuoA, H, J, K, L, M, N constitute the membrane sector of the complex.

The protein localises to the cell inner membrane. The catalysed reaction is a quinone + NADH + 5 H(+)(in) = a quinol + NAD(+) + 4 H(+)(out). Its function is as follows. NDH-1 shuttles electrons from NADH, via FMN and iron-sulfur (Fe-S) centers, to quinones in the respiratory chain. The immediate electron acceptor for the enzyme in this species is believed to be a menaquinone. Couples the redox reaction to proton translocation (for every two electrons transferred, four hydrogen ions are translocated across the cytoplasmic membrane), and thus conserves the redox energy in a proton gradient. The sequence is that of NADH-quinone oxidoreductase subunit A from Bacteroides thetaiotaomicron (strain ATCC 29148 / DSM 2079 / JCM 5827 / CCUG 10774 / NCTC 10582 / VPI-5482 / E50).